The sequence spans 132 residues: Agouti-signaling protein (132 aa).

Positions 1-22 (MDVTRLLLATLLVFLCFFTADS) are cleaved as a signal peptide. The N-linked (GlcNAc...) asparagine glycan is linked to Asn39. Residues 62-85 (ISRKEAEKKRSSKKEASMKTVARP) form a disordered region. Over residues 63-78 (SRKEAEKKRSSKKEAS) the composition is skewed to basic and acidic residues. 5 disulfides stabilise this stretch: Cys93-Cys108, Cys100-Cys114, Cys107-Cys125, Cys111-Cys132, and Cys116-Cys123. In terms of domain architecture, Agouti spans 93 to 132 (CVATRNSCKPPAPACCDPCASCQCRFFRSACSCRVLSLNC).

It localises to the secreted. Its function is as follows. Involved in the regulation of melanogenesis. The binding of ASP to MC1R precludes alpha-MSH initiated signaling and thus blocks production of cAMP, leading to a down-regulation of eumelanogenesis (brown/black pigment) and thus increasing synthesis of pheomelanin (yellow/red pigment). The chain is Agouti-signaling protein (ASIP) from Pongo pygmaeus (Bornean orangutan).